The sequence spans 537 residues: Fucosyltransferase 6 (537 aa).

Residues 1-20 (MYHIFQISSEVFRAFGLKMK) lie on the Cytoplasmic side of the membrane. A helical; Signal-anchor for type II membrane protein membrane pass occupies residues 21-41 (ILLTLVFSGLLIWSVVLVSFS). Residues 42–537 (NDFNNQLLVA…NDGLKLFDEL (496 aa)) lie on the Lumenal side of the membrane. N54, N231, and N378 each carry an N-linked (GlcNAc...) asparagine glycan.

Belongs to the glycosyltransferase 37 family. In terms of tissue distribution, expressed in roots and flowers.

It localises to the golgi apparatus. The protein localises to the golgi stack membrane. It participates in protein modification; protein glycosylation. May be involved in cell wall biosynthesis. May act as a fucosyltransferase. This Arabidopsis thaliana (Mouse-ear cress) protein is Fucosyltransferase 6 (FUT6).